The following is a 487-amino-acid chain: Cysteine--tRNA ligase (487 aa).

Residue C29 coordinates Zn(2+). The 'HIGH' region signature appears at 31–41; that stretch reads VTVYDVNHVGH. Residues C209, H234, and E238 each contribute to the Zn(2+) site. Residues 266-270 carry the 'KMSKS' region motif; that stretch reads KMSKS. Position 269 (K269) interacts with ATP.

This sequence belongs to the class-I aminoacyl-tRNA synthetase family. As to quaternary structure, monomer. It depends on Zn(2+) as a cofactor.

It is found in the cytoplasm. The catalysed reaction is tRNA(Cys) + L-cysteine + ATP = L-cysteinyl-tRNA(Cys) + AMP + diphosphate. The protein is Cysteine--tRNA ligase of Persephonella marina (strain DSM 14350 / EX-H1).